Consider the following 120-residue polypeptide: Nitrogen regulatory protein GlnK1 (120 aa).

ADP-binding positions include Thr-40, 48–50 (GEQ), Val-75, and 98–101 (GDGR). ATP is bound by residues Thr-40, 48–50 (GEQ), Val-75, and 98–101 (GDGR).

The protein belongs to the P(II) protein family. Homotrimer. Interacts and forms a complex with Amt1.

The protein resides in the cytoplasm. Functionally, involved in the regulation of nitrogen metabolism. Regulates the activity of its targets by protein-protein interaction in response to the nitrogen status of the cell. Regulates the activity of the ammonia channel Amt1 via direct interaction. The chain is Nitrogen regulatory protein GlnK1 from Archaeoglobus fulgidus (strain ATCC 49558 / DSM 4304 / JCM 9628 / NBRC 100126 / VC-16).